The chain runs to 72 residues: Bradykinin-potentiating peptide BmKbpp (72 aa).

An N-terminal signal peptide occupies residues 1–22; that stretch reads MNKKTLLVIFFVTMLIVDEVNS. The propeptide occupies 70–72; that stretch reads RRR.

This sequence belongs to the non-disulfide-bridged peptide (NDBP) superfamily. Long chain multifunctional peptide (group 2) family. As to expression, expressed by the venom gland.

The protein localises to the secreted. In terms of biological role, amphipathic peptide that shows bradykinin potentiating activity and antimicrobial activities against bacteria and fungi. Has higher antibacterial activities against Gram-negative than against Gram-positive bacteria. Also inhibits NADPH oxidase-dependent superoxide production (IC(50) is 0.4 uM on granulocytes stimulated with PMA, IC(50) is 0.51 uM on HL-60 cells undifferentiated and IC(50) is 0.53 uM on HL-60 cells treated with DMSO). The C-terminal peptide shows a higher bradykinin potentiating activity than the complete peptide. In Olivierus martensii (Manchurian scorpion), this protein is Bradykinin-potentiating peptide BmKbpp.